The chain runs to 110 residues: UPF0122 protein LMOf2365_1829 (110 aa).

The protein belongs to the UPF0122 family.

Functionally, might take part in the signal recognition particle (SRP) pathway. This is inferred from the conservation of its genetic proximity to ftsY/ffh. May be a regulatory protein. This Listeria monocytogenes serotype 4b (strain F2365) protein is UPF0122 protein LMOf2365_1829.